The primary structure comprises 39 residues: Photosystem II reaction center protein J (39 aa).

Residues 7–27 (IPLWIVATVAGTGVLVVVGLF) form a helical membrane-spanning segment.

The protein belongs to the PsbJ family. As to quaternary structure, PSII is composed of 1 copy each of membrane proteins PsbA, PsbB, PsbC, PsbD, PsbE, PsbF, PsbH, PsbI, PsbJ, PsbK, PsbL, PsbM, PsbT, PsbX, PsbY, PsbZ, Psb30/Ycf12, peripheral proteins PsbO, CyanoQ (PsbQ), PsbU, PsbV and a large number of cofactors. It forms dimeric complexes.

Its subcellular location is the cellular thylakoid membrane. One of the components of the core complex of photosystem II (PSII). PSII is a light-driven water:plastoquinone oxidoreductase that uses light energy to abstract electrons from H(2)O, generating O(2) and a proton gradient subsequently used for ATP formation. It consists of a core antenna complex that captures photons, and an electron transfer chain that converts photonic excitation into a charge separation. The polypeptide is Photosystem II reaction center protein J (Synechococcus elongatus (strain ATCC 33912 / PCC 7942 / FACHB-805) (Anacystis nidulans R2)).